Consider the following 872-residue polypeptide: Lysosomal cholesterol signaling protein (872 aa).

The Lumenal portion of the chain corresponds to 1–40 (MNSFSNLPAENLTIAVNMTKTLPTAVMHGFNSTNDPPSMS). The interval 3–372 (SFSNLPAENL…SAWLLTFPTM (370 aa)) is PIN-like transporter. N-linked (GlcNAc...) asparagine glycans are attached at residues asparagine 11, asparagine 17, and asparagine 31. Residues 41–61 (ITRLFPALLECFGIVLCGYIA) traverse the membrane as a helical segment. Phenylalanine 45 and tyrosine 59 together coordinate cholesterol. The Cytoplasmic segment spans residues 62-81 (GRANVITSTQAKGLGNFVSR). A helical transmembrane segment spans residues 82 to 102 (FALPALLFKNMVVLNFSNVDW). Residues 103–106 (SFLY) lie on the Lumenal side of the membrane. A helical membrane pass occupies residues 107-127 (SILIAKASVFFIVCVLTLLVA). The Cytoplasmic segment spans residues 128-135 (SPDSRFSK). Residues 136 to 156 (AGLFPIFATQSNDFALGYPIV) traverse the membrane as a discontinuously helical segment. The Lumenal portion of the chain corresponds to 157–169 (EALYQTTYPEYLQ). Residues 170–190 (YIYLVAPISLMMLNPIGFIFC) traverse the membrane as a helical segment. Residues 191–215 (EIQKWKDTQNASQNKIKIVGLGLLR) are Cytoplasmic-facing. A discontinuously helical transmembrane segment spans residues 216–236 (VLQNPIVFMVFIGIAFNFILD). Residues 237–245 (RKVPVYVEN) lie on the Lumenal side of the membrane. Residues 246–266 (FLDGLGNSFSGSALFYLGLTM) form a discontinuously helical membrane-spanning segment. Topologically, residues 267-275 (VGKIKRLKK) are cytoplasmic. Positions 268, 269, and 270 each coordinate cholesterol. The helical transmembrane segment at 276-296 (SAFVVLILLITAKLLVLPLLC) threads the bilayer. Over 297–317 (REMVELLDKGDSVVNHTSLSN) the chain is Lumenal. Asparagine 311 carries an N-linked (GlcNAc...) asparagine glycan. Residues 318 to 338 (YAFLYGVFPVAPGVAIFATQF) traverse the membrane as a discontinuously helical segment. Residues 339–348 (NMEVEIITSG) lie on the Cytoplasmic side of the membrane. Residues 349–369 (MVISTFVSAPIMYVSAWLLTF) form a helical membrane-spanning segment. The Lumenal portion of the chain corresponds to 370–383 (PTMDPKPLAYAIQN). The segment at 382 to 719 (QNVSFDISIV…FGIFGLDKHL (338 aa)) is GPCR. Asparagine 383 carries N-linked (GlcNAc...) asparagine glycosylation. The chain crosses the membrane as a helical span at residues 384 to 404 (VSFDISIVSLISLIWSQAILL). Over 405–416 (LSKKYKQLPHML) the chain is Cytoplasmic. Residues 417–437 (TTNLLIAQSIVCAGMMIWNFV) traverse the membrane as a helical segment. Residues 438–440 (KEK) lie on the Lumenal side of the membrane. A helical transmembrane segment spans residues 441 to 461 (NFVGQILVFVLLYSSLYSTYL). Residues 462 to 482 (WTGLLAISLFLLKKRERVQIP) lie on the Cytoplasmic side of the membrane. The chain crosses the membrane as a helical span at residues 483 to 503 (VGIIIISGWGIPALLVGVLLI). Residues 504–522 (TGKHSGDSIDSAFFYGKEQ) lie on the Lumenal side of the membrane. A helical transmembrane segment spans residues 523-543 (MITTAVTLFCSILIAGISLMC). At 544–662 (MNRTAQAGSY…GDQQLTRHVL (119 aa)) the chain is on the cytoplasmic side. Residue arginine 659 coordinates cholesterol. The helical transmembrane segment at 663–683 (LCLLLIIGLFANLSSCLWWLF) threads the bilayer. The Lumenal portion of the chain corresponds to 684–693 (NQEPGRLYVE). Residues 694 to 714 (LQFFCAVFNFGQGFISFGIFG) traverse the membrane as a helical segment. Residues 715-872 (LDKHLIILPF…SSPPSHSPKT (158 aa)) are Cytoplasmic-facing. The DEP domain maps to 759-837 (YHRDLCIRNI…DEYLFYRFLQ (79 aa)).

In terms of assembly, homodimer; via the transporter region and DEP domain. Interacts with the GATOR1 complex; preventing interaction between GATOR1 and KICSTOR; interaction is disrupted upon cholesterol starvation.

The protein localises to the lysosome membrane. Cholesterol-binding protein that acts as a regulator of mTORC1 signaling pathway. Acts as a sensor of cholesterol to signal cholesterol sufficiency to mTORC1: in presence of cholesterol, binds cholesterol, leading to disruption of the interaction between the GATOR1 and KICSTOR complexes and promotion of mTORC1 signaling. Upon cholesterol starvation, GPR155/LYCHOS is unable to perturb the association between GATOR1 and KICSTOR, leading to mTORC1 signaling inhibition. Binds indole-3-acetic acid and may play a role in tryptophan metabolism. This chain is Lysosomal cholesterol signaling protein (GPR155), found in Pongo abelii (Sumatran orangutan).